We begin with the raw amino-acid sequence, 378 residues long: Quinolinate synthase (378 aa).

2 residues coordinate iminosuccinate: His59 and Ser80. Cys125 lines the [4Fe-4S] cluster pocket. Iminosuccinate-binding positions include 151-153 (YAN) and Ser168. A [4Fe-4S] cluster-binding site is contributed by Cys212. Iminosuccinate is bound by residues 238–240 (HPE) and Thr255. Cys309 lines the [4Fe-4S] cluster pocket.

Belongs to the quinolinate synthase family. Type 1 subfamily. Requires [4Fe-4S] cluster as cofactor.

It localises to the cytoplasm. The catalysed reaction is iminosuccinate + dihydroxyacetone phosphate = quinolinate + phosphate + 2 H2O + H(+). It participates in cofactor biosynthesis; NAD(+) biosynthesis; quinolinate from iminoaspartate: step 1/1. Its function is as follows. Catalyzes the condensation of iminoaspartate with dihydroxyacetone phosphate to form quinolinate. In Burkholderia thailandensis (strain ATCC 700388 / DSM 13276 / CCUG 48851 / CIP 106301 / E264), this protein is Quinolinate synthase.